The following is a 471-amino-acid chain: Histone deacetylase 6 (471 aa).

Position 1 is an N-acetylmethionine (Met-1). A histone deacetylase region spans residues 20–333; that stretch reads RVSYFYEPTI…WCYETAVAVG (314 aa). His-153 serves as the catalytic Proton donor/acceptor. Zn(2+) is bound by residues Asp-188, His-190, and Asp-276. The disordered stretch occupies residues 389 to 471; sequence PSVQFQHTPP…PEPDVNPPSS (83 aa). A compositionally biased stretch (acidic residues) spans 453–463; it reads GEDEMDDDNPE.

This sequence belongs to the histone deacetylase family. HD type 1 subfamily. As to quaternary structure, interacts with Coi1, which functions in an SCF complex that recruits regulators for ubiquitination. Interacts with AHL22. Interacts with AS1. Part of the AS1 repressor complex composed of AS1, LBD6/AS2 and HDA6. Binds to EBS and SHL. Interacts with MBD6. Interacts with HDA5. Interacts with FLD. Zn(2+) is required as a cofactor. As to expression, not detected in leaves, stems, flowers and young siliques.

It localises to the nucleus. The protein resides in the nucleolus. It catalyses the reaction N(6)-acetyl-L-lysyl-[histone] + H2O = L-lysyl-[histone] + acetate. With respect to regulation, inhibited by trichostatin A. Responsible for the deacetylation of lysine residues on the N-terminal part of the core histones (H2A, H2B, H3 and H4). Might remove acetyl residues only from specific targets, such as rDNA repeats or complex transgenes. Histone deacetylation gives a tag for epigenetic repression and plays an important role in transcriptional regulation, cell cycle progression and developmental events. Histone deacetylases act via the formation of large multiprotein complexes. Required for rRNA gene silencing in nucleolar dominance. Plays a role in transgene silencing, but this effect seems to bee independent of the histone deacetylase activity. Part of the AS1 repressor complex to regulate the KNOX expression in leaf development. Binds to KNAT1, KNAT2, and KNATM chromatin. Involved in the regulation of flowering time. Forms a histone deacetylase complex with HDA5, FLD and MSI4/FVE that represses FLC gene expression to control flowering time. The sequence is that of Histone deacetylase 6 from Arabidopsis thaliana (Mouse-ear cress).